A 486-amino-acid chain; its full sequence is Beta-barrel assembly-enhancing protease (486 aa).

The N-terminal stretch at 1–19 (MIATLLSSLLLTGPISAGA) is a signal peptide. His134 lines the Zn(2+) pocket. Glu135 is an active-site residue. Positions 138 and 199 each coordinate Zn(2+). Asp203 acts as the Proton donor in catalysis.

Belongs to the peptidase M48 family. BepA subfamily. The cofactor is Zn(2+).

Its subcellular location is the periplasm. Functionally, functions both as a chaperone and a metalloprotease. Maintains the integrity of the outer membrane by promoting either the assembly or the elimination of outer membrane proteins, depending on their folding state. The sequence is that of Beta-barrel assembly-enhancing protease from Yersinia pestis.